The primary structure comprises 346 residues: Methylthioribose-1-phosphate isomerase (346 aa).

Substrate is bound by residues 48 to 50 (RGA), Arg-91, and Gln-200. The active-site Proton donor is the Asp-241. 251-252 (NK) contributes to the substrate binding site.

This sequence belongs to the eIF-2B alpha/beta/delta subunits family. MtnA subfamily.

The enzyme catalyses 5-(methylsulfanyl)-alpha-D-ribose 1-phosphate = 5-(methylsulfanyl)-D-ribulose 1-phosphate. Its pathway is amino-acid biosynthesis; L-methionine biosynthesis via salvage pathway; L-methionine from S-methyl-5-thio-alpha-D-ribose 1-phosphate: step 1/6. Catalyzes the interconversion of methylthioribose-1-phosphate (MTR-1-P) into methylthioribulose-1-phosphate (MTRu-1-P). The sequence is that of Methylthioribose-1-phosphate isomerase from Picosynechococcus sp. (strain ATCC 27264 / PCC 7002 / PR-6) (Agmenellum quadruplicatum).